Reading from the N-terminus, the 159-residue chain is ATP synthase subunit b (159 aa).

A helical membrane pass occupies residues 2–22 (NISIPQIIAAILNFIILLLIV).

Belongs to the ATPase B chain family. F-type ATPases have 2 components, F(1) - the catalytic core - and F(0) - the membrane proton channel. F(1) has five subunits: alpha(3), beta(3), gamma(1), delta(1), epsilon(1). F(0) has three main subunits: a(1), b(2) and c(10-14). The alpha and beta chains form an alternating ring which encloses part of the gamma chain. F(1) is attached to F(0) by a central stalk formed by the gamma and epsilon chains, while a peripheral stalk is formed by the delta and b chains.

The protein localises to the cell membrane. Functionally, f(1)F(0) ATP synthase produces ATP from ADP in the presence of a proton or sodium gradient. F-type ATPases consist of two structural domains, F(1) containing the extramembraneous catalytic core and F(0) containing the membrane proton channel, linked together by a central stalk and a peripheral stalk. During catalysis, ATP synthesis in the catalytic domain of F(1) is coupled via a rotary mechanism of the central stalk subunits to proton translocation. Component of the F(0) channel, it forms part of the peripheral stalk, linking F(1) to F(0). The chain is ATP synthase subunit b from Clostridium botulinum (strain Loch Maree / Type A3).